The sequence spans 323 residues: MIDFGNFYSLIAKNHLSHWLETLPAQIANWQREQQHGLFKQWSNAVEFLPEIKPYRLDLLHSVTAESEEPLSAGQIKRIETLMRNLMPWRKGPFSLYGVNIDTEWRSDWKWDRVLPHLSDLTGRTILDVGCGSGYHMWRMIGAGAHLAVGIDPTQLFLCQFEAVRKLLGNDQRAHLLPLGIEQLPALKAFDTVFSMGVLYHRRSPLEHLWQLKDQLVNEGELVLETLVIDGDENTVLVPGDRYAQMRNVYFIPSALALKNWLKKCGFVDIRIADVSVTTTEEQRRTEWMVTESLADFLDPHDPSKTVEGYPAPKRAVLIARKP.

Residues Lys91, Trp105, Lys110, Gly130, 152–154 (DPT), 181–182 (IE), Met196, Tyr200, and Arg315 each bind carboxy-S-adenosyl-L-methionine.

It belongs to the class I-like SAM-binding methyltransferase superfamily. CmoB family. In terms of assembly, homotetramer.

It catalyses the reaction carboxy-S-adenosyl-L-methionine + 5-hydroxyuridine(34) in tRNA = 5-carboxymethoxyuridine(34) in tRNA + S-adenosyl-L-homocysteine + H(+). In terms of biological role, catalyzes carboxymethyl transfer from carboxy-S-adenosyl-L-methionine (Cx-SAM) to 5-hydroxyuridine (ho5U) to form 5-carboxymethoxyuridine (cmo5U) at position 34 in tRNAs. The chain is tRNA U34 carboxymethyltransferase from Escherichia coli O7:K1 (strain IAI39 / ExPEC).